Reading from the N-terminus, the 227-residue chain is Translation initiation factor 6 (227 aa).

The protein belongs to the eIF-6 family.

Binds to the 50S ribosomal subunit and prevents its association with the 30S ribosomal subunit to form the 70S initiation complex. In Methanococcus maripaludis (strain C5 / ATCC BAA-1333), this protein is Translation initiation factor 6.